The primary structure comprises 344 residues: UDP-3-O-acylglucosamine N-acyltransferase (344 aa).

The Proton acceptor role is filled by His-236.

Belongs to the transferase hexapeptide repeat family. LpxD subfamily. As to quaternary structure, homotrimer.

It carries out the reaction a UDP-3-O-[(3R)-3-hydroxyacyl]-alpha-D-glucosamine + a (3R)-hydroxyacyl-[ACP] = a UDP-2-N,3-O-bis[(3R)-3-hydroxyacyl]-alpha-D-glucosamine + holo-[ACP] + H(+). The protein operates within bacterial outer membrane biogenesis; LPS lipid A biosynthesis. In terms of biological role, catalyzes the N-acylation of UDP-3-O-acylglucosamine using 3-hydroxyacyl-ACP as the acyl donor. Is involved in the biosynthesis of lipid A, a phosphorylated glycolipid that anchors the lipopolysaccharide to the outer membrane of the cell. This is UDP-3-O-acylglucosamine N-acyltransferase from Nitratidesulfovibrio vulgaris (strain ATCC 29579 / DSM 644 / CCUG 34227 / NCIMB 8303 / VKM B-1760 / Hildenborough) (Desulfovibrio vulgaris).